Consider the following 209-residue polypeptide: High frequency lysogenization protein HflD homolog (209 aa).

Belongs to the HflD family.

The protein resides in the cytoplasm. The protein localises to the cell inner membrane. The chain is High frequency lysogenization protein HflD homolog from Saccharophagus degradans (strain 2-40 / ATCC 43961 / DSM 17024).